A 293-amino-acid polypeptide reads, in one-letter code: Ribosomal protein L11 methyltransferase (293 aa).

S-adenosyl-L-methionine is bound by residues threonine 145, glycine 166, aspartate 188, and asparagine 230.

It belongs to the methyltransferase superfamily. PrmA family.

It localises to the cytoplasm. The catalysed reaction is L-lysyl-[protein] + 3 S-adenosyl-L-methionine = N(6),N(6),N(6)-trimethyl-L-lysyl-[protein] + 3 S-adenosyl-L-homocysteine + 3 H(+). Its function is as follows. Methylates ribosomal protein L11. The chain is Ribosomal protein L11 methyltransferase from Shewanella sediminis (strain HAW-EB3).